A 702-amino-acid chain; its full sequence is DnaJ homolog subfamily C member 14 (702 aa).

2 disordered regions span residues 1-148 (MAQK…GGNG) and 165-229 (DELE…KRSQ). Residues 75 to 84 (HGPPGGPGPP) show a composition bias toward pro residues. Residues 88–103 (EDPDQSETSSEEESGV) are compositionally biased toward acidic residues. Positions 113–133 (TGNQKDGNSFLSIPSACNCQG) are enriched in polar residues. The span at 165 to 175 (DELEEEYDDEE) shows a compositional bias: acidic residues. Positions 192–201 (PPSRRQRHRF) are enriched in basic residues. Residues 202 to 217 (PTKEDTREGGRRDPRS) show a composition bias toward basic and acidic residues. Residues 218–227 (PGRHRLGRKR) show a composition bias toward basic residues. A run of 3 helical transmembrane segments spans residues 250–270 (AGFW…ETCG), 300–320 (GWAQ…VGLF), and 326–346 (LLGA…QLGW). The region spanning 443–507 (NPFHVLGVEA…EKRKEYEMKR (65 aa)) is the J domain. Residues 658-702 (MPNGNFFAAPQPAPGAAAASKPNSTVPKGEAKPKRRKKVRRPFQR) form a disordered region. A compositionally biased stretch (low complexity) spans 659–676 (PNGNFFAAPQPAPGAAAA). The span at 690–702 (PKRRKKVRRPFQR) shows a compositional bias: basic residues.

In terms of assembly, interacts with the FxxxFxxxF motif of DRD1 via its C-terminal domain. Highly expressed in pancreas and selectively expressed in brain, lung, liver, skeletal muscle and kidney.

Its subcellular location is the endoplasmic reticulum membrane. Regulates the export of target proteins, such as DRD1, from the endoplasmic reticulum to the cell surface. This chain is DnaJ homolog subfamily C member 14 (DNAJC14), found in Homo sapiens (Human).